A 292-amino-acid polypeptide reads, in one-letter code: MFTGSIVAIVTPMDEKGNVCRASLKKLIDYHVASGTSAIVSVGTTGESATLNHDEHADVVMMTLDLADGRIPVIAGTGANATAEAISLTQRFNDSGIVGCLTVTPYYNRPSQEGLYQHFKAIAEHTDLPQILYNVPSRTGCDLLPETVGRLAKVKNIIGIKEATGNLTRVNQIKELVSDDFVLLSGDDASALDFMQLGGHGVISVTANVAARDMAQMCKLAAEGHFAEARVINQRLMPLHNKLFVEPNPIPVKWACKELGLVATDTLRLPMTPITDSGRETVRAALKHAGLL.

Position 45 (Thr-45) interacts with pyruvate. Tyr-133 serves as the catalytic Proton donor/acceptor. Catalysis depends on Lys-161, which acts as the Schiff-base intermediate with substrate. Pyruvate is bound at residue Ile-203.

Belongs to the DapA family. As to quaternary structure, homotetramer; dimer of dimers.

Its subcellular location is the cytoplasm. It catalyses the reaction L-aspartate 4-semialdehyde + pyruvate = (2S,4S)-4-hydroxy-2,3,4,5-tetrahydrodipicolinate + H2O + H(+). It participates in amino-acid biosynthesis; L-lysine biosynthesis via DAP pathway; (S)-tetrahydrodipicolinate from L-aspartate: step 3/4. Catalyzes the condensation of (S)-aspartate-beta-semialdehyde [(S)-ASA] and pyruvate to 4-hydroxy-tetrahydrodipicolinate (HTPA). This is 4-hydroxy-tetrahydrodipicolinate synthase from Shigella flexneri.